We begin with the raw amino-acid sequence, 465 residues long: Probable tRNA modification GTPase MnmE (465 aa).

Residues arginine 23, glutamate 85, and arginine 124 each contribute to the (6S)-5-formyl-5,6,7,8-tetrahydrofolate site. The 164-residue stretch at 221–384 (GTKVCIIGKP…LNNCILDLSS (164 aa)) folds into the TrmE-type G domain. Residues 231-236 (NVGKSS), 250-256 (TNFPGTT), and 275-278 (DTAG) contribute to the GTP site. Mg(2+) contacts are provided by serine 235 and threonine 256. Lysine 465 is a (6S)-5-formyl-5,6,7,8-tetrahydrofolate binding site.

Belongs to the TRAFAC class TrmE-Era-EngA-EngB-Septin-like GTPase superfamily. TrmE GTPase family. The cofactor is K(+).

Its subcellular location is the plastid. The protein resides in the chloroplast. Exhibits a very high intrinsic GTPase hydrolysis rate. Involved in the addition of a carboxymethylaminomethyl (cmnm) group at the wobble position (U34) of certain tRNAs, forming tRNA-cmnm(5)s(2)U34. This Cyanidium caldarium (Red alga) protein is Probable tRNA modification GTPase MnmE.